Here is a 382-residue protein sequence, read N- to C-terminus: Mannitol-1-phosphate 5-dehydrogenase (382 aa).

Residue 3–14 (ALHFGAGNIGRG) participates in NAD(+) binding.

Belongs to the mannitol dehydrogenase family.

It catalyses the reaction D-mannitol 1-phosphate + NAD(+) = beta-D-fructose 6-phosphate + NADH + H(+). The polypeptide is Mannitol-1-phosphate 5-dehydrogenase (Tolumonas auensis (strain DSM 9187 / NBRC 110442 / TA 4)).